A 111-amino-acid chain; its full sequence is UPF0060 membrane protein XAC3064 (111 aa).

4 helical membrane-spanning segments follow: residues 8-28 (LLLFAATALAELVGCYLPYLW), 32-52 (GGSVWLLLPTALSLAVFVWLL), 64-84 (AAYGGVYIASALLWLWWVDGV), and 91-111 (LLGAACCLLGMAVIMFSPRSA).

This sequence belongs to the UPF0060 family.

The protein resides in the cell inner membrane. In Xanthomonas axonopodis pv. citri (strain 306), this protein is UPF0060 membrane protein XAC3064.